A 56-amino-acid chain; its full sequence is MSKGTASMGKRQKRTHAKCRRCGSVSLNVHTKQCTSCGFGKTSRMRTYKWQAKCKY.

Zn(2+)-binding residues include Cys-19, Cys-22, Cys-34, and Cys-37. The C4-type zinc-finger motif lies at 19–37 (CRRCGSVSLNVHTKQCTSC).

Belongs to the eukaryotic ribosomal protein eL37 family. The cofactor is Zn(2+).

In terms of biological role, binds to the 23S rRNA. The protein is Large ribosomal subunit protein eL37 of Methanosarcina mazei (strain ATCC BAA-159 / DSM 3647 / Goe1 / Go1 / JCM 11833 / OCM 88) (Methanosarcina frisia).